Here is a 388-residue protein sequence, read N- to C-terminus: Succinate--CoA ligase [ADP-forming] subunit beta (388 aa).

In terms of domain architecture, ATP-grasp spans 9–244 (KALFAEYGLP…PSQDDAREAH (236 aa)). Residues Lys-46, 53–55 (GRG), Glu-99, Thr-102, and Glu-107 contribute to the ATP site. Mg(2+) contacts are provided by Asn-199 and Asp-213. Substrate-binding positions include Asn-264 and 321–323 (GIV).

The protein belongs to the succinate/malate CoA ligase beta subunit family. Heterotetramer of two alpha and two beta subunits. Mg(2+) serves as cofactor.

The enzyme catalyses succinate + ATP + CoA = succinyl-CoA + ADP + phosphate. It catalyses the reaction GTP + succinate + CoA = succinyl-CoA + GDP + phosphate. It functions in the pathway carbohydrate metabolism; tricarboxylic acid cycle; succinate from succinyl-CoA (ligase route): step 1/1. Functionally, succinyl-CoA synthetase functions in the citric acid cycle (TCA), coupling the hydrolysis of succinyl-CoA to the synthesis of either ATP or GTP and thus represents the only step of substrate-level phosphorylation in the TCA. The beta subunit provides nucleotide specificity of the enzyme and binds the substrate succinate, while the binding sites for coenzyme A and phosphate are found in the alpha subunit. The protein is Succinate--CoA ligase [ADP-forming] subunit beta of Shewanella amazonensis (strain ATCC BAA-1098 / SB2B).